The sequence spans 241 residues: Tubulin-like protein alpha-4B (241 aa).

Residues 1–10 show a composition bias toward basic and acidic residues; the sequence is MRHQQTERQD. The tract at residues 1–20 is disordered; the sequence is MRHQQTERQDPSQPLSRQHG. Aspartate 10 lines the GTP pocket. Aspartate 10 contributes to the Mg(2+) binding site. The span at 11–20 shows a compositional bias: polar residues; that stretch reads PSQPLSRQHG. Residues serine 79, glycine 83, threonine 84, threonine 118, asparagine 145, and asparagine 167 each contribute to the GTP site. Residue glutamate 193 is part of the active site.

It belongs to the tubulin family. Mg(2+) serves as cofactor. Some glutamate residues at the C-terminus are polyglutamylated, resulting in polyglutamate chains on the gamma-carboxyl group. Polyglutamylation plays a key role in microtubule severing by spastin (SPAST). SPAST preferentially recognizes and acts on microtubules decorated with short polyglutamate tails: severing activity by SPAST increases as the number of glutamates per tubulin rises from one to eight, but decreases beyond this glutamylation threshold. Glutamylation is also involved in cilia motility. In terms of processing, some glutamate residues at the C-terminus are monoglycylated but not polyglycylated due to the absence of functional TTLL10 in human. Monoglycylation is mainly limited to tubulin incorporated into cilia and flagella axonemes, which is required for their stability and maintenance. Flagella glycylation controls sperm motility. Both polyglutamylation and monoglycylation can coexist on the same protein on adjacent residues, and lowering glycylation levels increases polyglutamylation, and reciprocally.

The protein localises to the cytoplasm. The protein resides in the cytoskeleton. The catalysed reaction is GTP + H2O = GDP + phosphate + H(+). Its function is as follows. Tubulin is the major constituent of microtubules, a cylinder consisting of laterally associated linear protofilaments composed ofalpha- and beta-tubulin heterodimers. The chain is Tubulin-like protein alpha-4B (TUBA4B) from Homo sapiens (Human).